Here is a 144-residue protein sequence, read N- to C-terminus: 3-hydroxyacyl-[acyl-carrier-protein] dehydratase FabZ (144 aa).

H51 is a catalytic residue.

The protein belongs to the thioester dehydratase family. FabZ subfamily.

It is found in the cytoplasm. It carries out the reaction a (3R)-hydroxyacyl-[ACP] = a (2E)-enoyl-[ACP] + H2O. In terms of biological role, involved in unsaturated fatty acids biosynthesis. Catalyzes the dehydration of short chain beta-hydroxyacyl-ACPs and long chain saturated and unsaturated beta-hydroxyacyl-ACPs. The protein is 3-hydroxyacyl-[acyl-carrier-protein] dehydratase FabZ of Clostridium botulinum (strain Loch Maree / Type A3).